Here is a 510-residue protein sequence, read N- to C-terminus: Beta-glucosidase 12 (510 aa).

The N-terminal stretch at 1-24 (MAAAGAMPGGLLLTFLLLAVVASG) is a signal peptide. Residue Q53 coordinates a beta-D-glucoside. N122 carries N-linked (GlcNAc...) asparagine glycosylation. A beta-D-glucoside-binding positions include H157 and 202–203 (NE). The active-site Proton donor is the E203. Intrachain disulfides connect C208–C243 and C222–C230. N229 carries N-linked (GlcNAc...) asparagine glycosylation. Y346 lines the a beta-D-glucoside pocket. N-linked (GlcNAc...) asparagine glycosylation is found at N361 and N371. E417 contacts a beta-D-glucoside. E417 (nucleophile) is an active-site residue. A glycan (N-linked (GlcNAc...) asparagine) is linked at N425. A beta-D-glucoside is bound by residues W466, 473 to 474 (EW), and F482.

The protein belongs to the glycosyl hydrolase 1 family.

It localises to the secreted. It carries out the reaction Hydrolysis of terminal, non-reducing beta-D-glucosyl residues with release of beta-D-glucose.. Hydrolyzes p-nitrophenyl beta-D-glucoside, p-nitrophenyl beta-D-galactoside, p-nitrophenyl beta-D-xyloside, p-nitrophenyl beta-D-fucoside, p-nitrophenyl beta-L-arabinoside, cello-oligosaccharides and laminaribiose. The chain is Beta-glucosidase 12 from Oryza sativa subsp. indica (Rice).